The sequence spans 269 residues: 3'(2'),5'-bisphosphate nucleotidase CysQ (269 aa).

Glutamate 69, aspartate 89, leucine 91, aspartate 92, and aspartate 216 together coordinate Mg(2+). Glutamate 69 contributes to the substrate binding site. Substrate-binding positions include 91–94 (LDGT) and aspartate 216.

Belongs to the inositol monophosphatase superfamily. CysQ family. Requires Mg(2+) as cofactor.

It localises to the cell inner membrane. It catalyses the reaction adenosine 3',5'-bisphosphate + H2O = AMP + phosphate. Its function is as follows. Converts adenosine-3',5'-bisphosphate (PAP) to AMP. This is 3'(2'),5'-bisphosphate nucleotidase CysQ from Haemophilus influenzae (strain ATCC 51907 / DSM 11121 / KW20 / Rd).